Here is a 536-residue protein sequence, read N- to C-terminus: MDSNIDVEILSILSEASAPVGAKIIADSLKDRGYDIGERAVRYHLKVLDENSLTKKLGYSGREITEKGIEELEKANISFRIGSVFSQVIEKLYLSDFPSKVLINTAKFEGDYKTIKEMVLRSFEAGYSVGDYLNIKKKGNTVSVETLCSITFDNFLLKNGIIPTPEYGGIVKFEDYEPVNFEGVIDFKSSSIDPLVAFIMQGKTDVIGVIENGEGLVPANFRVIPKSSEKQFETILKKDMLNSVLAYGTENVLGMNLNPEQIGVVLVGGLTPLCVPHESGYTADISAATQLKDISSMEKKTKGFLEAKKKKGKFKVTPVLSKMLSKMQTINYDIEDKKGNVVVNTAKIPIEYKEEAINALKDSYENKLAISDRLKVECDDKFLNAYTICSLTVDGVFLKNKIPVIPYYGGILEVKADKKRFIEAIDYEGTSLDPHEVFFNKADGKNYILAGIRKVPMSASEKLIELNEKLGWNSIIEIGRPNNDICGVRVEKCMFGITTIGGTNPFANIRKNNIPVEMKTLHKSIDYSELTHYDDI.

A winged helix-turn-helix region spans residues Val-7–Leu-72. 2 NRD regions span residues Arg-80–Phe-314 and Lys-315–Ile-536.

The protein belongs to the NrpR family. In terms of assembly, homotetramer. Binds to a single operator as a dimer and cooperatively to two operators as a dimer pair.

Its activity is regulated as follows. Under nitrogen limitation, binding of the intracellular nitrogen metabolite 2-oxoglutarate to NrpR decreases the binding affinity of NrpR to DNA, leading to initiation of transcription. In terms of biological role, transcriptional repressor of nitrogen fixation and assimilation genes. Binds to two tandem operators in the glnA and nif promoters, thereby blocking transcription of the genes. In Methanococcus maripaludis (strain DSM 14266 / JCM 13030 / NBRC 101832 / S2 / LL), this protein is Global nitrogen regulator NrpR.